A 662-amino-acid polypeptide reads, in one-letter code: MFNEKDQLAVDTLRALSIDTIEKANSGHPGLPMGAAPMAYTLWTRHLNFNPQSKDYFNRDRFVLSAGHGSALLYSLLHVSGSLELEELKQFRQWGSKTPGHPEYRHTDGVEVTTGPLGQGFAMSVGLALAEDHLAGKFNKEGYNVVDHYTYVLASDGDLMEGISHEAASFAGHNKLSKLVVLYDSNDISLDGELNKAFSENTKARFEAYGWNYLLVKDGNDLEEIDKAITTAKSQEGPTIIEVKTTIGFGSPNKAGTNGVHGAPLGEVERKLTFENYGLDPEKRFNVSEEVYEIFQNTMLKRANEDESQWNSLLEKYAETYPELAEEFKLAISGKLPKNYKDELPRFELGHNGASRADSGTVIQAISKTVPSFFGGSADLAGSNKSNVNDATDYSSETPEGKNVWFGVREFAMGAAVNGMAAHGGLHPYGATFFVFSDYLKPALRLSSIMGLNATFIFTHDSIAVGEDGPTHEPIEQLAGLRAIPNMNVIRPADGNETRVAWEVALESESTPTSLVLTRQNLPVLDVPEDVVEEGVRKGAYTVYGSEETPEFLLLASGSEVSLAVEAAKDLEKQGKSVRVVSMPNWNAFEQQSEEYKESVIPSSVTKRVAIEMASPLGWHKYVGTAGKVIAIDGFGASAPGDLVVEKYGFTKENILNQVMSL.

A substrate-binding site is contributed by histidine 28. Thiamine diphosphate contacts are provided by residues histidine 68 and 115–117; that span reads GPL. Aspartate 156 serves as a coordination point for Mg(2+). Thiamine diphosphate contacts are provided by glycine 157 and asparagine 186. Positions 186 and 188 each coordinate Mg(2+). Substrate is bound by residues histidine 261, arginine 356, and serine 383. Histidine 261 contributes to the thiamine diphosphate binding site. Glutamate 410 (proton donor) is an active-site residue. Thiamine diphosphate is bound at residue phenylalanine 436. Substrate is bound by residues histidine 460, aspartate 468, and arginine 519.

It belongs to the transketolase family. In terms of assembly, homodimer. Requires Mg(2+) as cofactor. Ca(2+) is required as a cofactor. It depends on Mn(2+) as a cofactor. The cofactor is Co(2+). Thiamine diphosphate serves as cofactor.

The catalysed reaction is D-sedoheptulose 7-phosphate + D-glyceraldehyde 3-phosphate = aldehydo-D-ribose 5-phosphate + D-xylulose 5-phosphate. The protein operates within carbohydrate biosynthesis; Calvin cycle. It functions in the pathway carbohydrate degradation; pentose phosphate pathway. Functionally, catalyzes the transfer of a two-carbon ketol group from a ketose donor to an aldose acceptor, via a covalent intermediate with the cofactor thiamine pyrophosphate. The protein is Transketolase (tkt) of Staphylococcus aureus (strain COL).